Here is a 103-residue protein sequence, read N- to C-terminus: Large ribosomal subunit protein bL21 (103 aa).

This sequence belongs to the bacterial ribosomal protein bL21 family. In terms of assembly, part of the 50S ribosomal subunit. Contacts protein L20.

This protein binds to 23S rRNA in the presence of protein L20. The chain is Large ribosomal subunit protein bL21 from Wigglesworthia glossinidia brevipalpis.